The primary structure comprises 383 residues: uncharacterized protein (383 aa).

It belongs to the peptidase M20 family.

This is an uncharacterized protein from Staphylococcus epidermidis (strain ATCC 12228 / FDA PCI 1200).